A 236-amino-acid chain; its full sequence is 2,3,4,5-tetrahydropyridine-2,6-dicarboxylate N-acetyltransferase (236 aa).

Belongs to the transferase hexapeptide repeat family. DapH subfamily.

The enzyme catalyses (S)-2,3,4,5-tetrahydrodipicolinate + acetyl-CoA + H2O = L-2-acetamido-6-oxoheptanedioate + CoA. Its pathway is amino-acid biosynthesis; L-lysine biosynthesis via DAP pathway; LL-2,6-diaminopimelate from (S)-tetrahydrodipicolinate (acetylase route): step 1/3. In terms of biological role, catalyzes the transfer of an acetyl group from acetyl-CoA to tetrahydrodipicolinate. The polypeptide is 2,3,4,5-tetrahydropyridine-2,6-dicarboxylate N-acetyltransferase (Clostridium perfringens (strain SM101 / Type A)).